Reading from the N-terminus, the 214-residue chain is Vascular endothelial growth factor A (214 aa).

The N-terminal stretch at 1–26 (MNFLLSWVHWSLALLLYLHHAKWSQA) is a signal peptide. Disulfide bonds link Cys51-Cys93, Cys82-Cys127, and Cys86-Cys129. Asn100 carries an N-linked (GlcNAc...) asparagine glycan. The span at 131–142 (PKKDRARQEKKS) shows a compositional bias: basic and acidic residues. The disordered stretch occupies residues 131-162 (PKKDRARQEKKSIRGKGKGQKRKRKKSRYKPW). Over residues 143 to 159 (IRGKGKGQKRKRKKSRY) the composition is skewed to basic residues.

The protein belongs to the PDGF/VEGF growth factor family. In terms of assembly, homodimer; disulfide-linked. Also found as heterodimer with PGF. Interacts with NRP1. Interacts with BSG. Interacts with CD82; this interaction inhibits VEGFA-mediated signaling pathway.

The protein localises to the secreted. In terms of biological role, growth factor active in angiogenesis, vasculogenesis and endothelial cell growth. Induces endothelial cell proliferation, promotes cell migration, inhibits apoptosis and induces permeabilization of blood vessels. Binds to the FLT1/VEGFR1 and KDR/VEGFR2 receptors, heparan sulfate and heparin. Binding to NRP1 receptor initiates a signaling pathway needed for motor neuron axon guidance and cell body migration, including for the caudal migration of facial motor neurons from rhombomere 4 to rhombomere 6 during embryonic development. Also binds the DEAR/FBXW7-AS1 receptor. This is Vascular endothelial growth factor A (VEGFA) from Canis lupus familiaris (Dog).